Consider the following 378-residue polypeptide: Chaperone protein DnaJ (378 aa).

Positions 5 to 72 (DFYEVLGVPK…QKRAAYDQFG (68 aa)) constitute a J domain. The CR-type zinc finger occupies 138–216 (GKEAQIRIPS…CHGQGKVKKQ (79 aa)). Zn(2+) is bound by residues C151, C154, C168, C171, C190, C193, C204, and C207. 4 CXXCXGXG motif repeats span residues 151-158 (CETCHGSG), 168-175 (CTTCSGTG), 190-197 (CPHCRGTG), and 204-211 (CVTCHGQG). The segment at 354–378 (SLKKGGGKHSPSGESWTDRLKNLFT) is disordered. A compositionally biased stretch (basic and acidic residues) spans 369-378 (WTDRLKNLFT).

Belongs to the DnaJ family. In terms of assembly, homodimer. Zn(2+) serves as cofactor.

It is found in the cytoplasm. In terms of biological role, participates actively in the response to hyperosmotic and heat shock by preventing the aggregation of stress-denatured proteins and by disaggregating proteins, also in an autonomous, DnaK-independent fashion. Unfolded proteins bind initially to DnaJ; upon interaction with the DnaJ-bound protein, DnaK hydrolyzes its bound ATP, resulting in the formation of a stable complex. GrpE releases ADP from DnaK; ATP binding to DnaK triggers the release of the substrate protein, thus completing the reaction cycle. Several rounds of ATP-dependent interactions between DnaJ, DnaK and GrpE are required for fully efficient folding. Also involved, together with DnaK and GrpE, in the DNA replication of plasmids through activation of initiation proteins. This chain is Chaperone protein DnaJ, found in Paracidovorax citrulli (strain AAC00-1) (Acidovorax citrulli).